A 232-amino-acid chain; its full sequence is Gene 65 protein (232 aa).

This Mycobacterium phage D29 (Mycobacteriophage D29) protein is Gene 65 protein (65).